The chain runs to 636 residues: MAARRTRKDDGSNWTVADSRGVYGIRHWGAGYFAINDGGNVEVRPQGADSTPIDLYELVGQLREAGLSLPLLVRFPDILQDRVRKLTGAFDANIERLEYQSRYTALYPIKVNQQEAVVENIIATENVSIGLEAGSKPELMAVLALAPKGGTIVCNGYKDREFIKLALMGQKLGHNVFIVIEKESEVQLVIEEAANVGVQPQVGLRVRLSSLASSKWADTGGEKAKFGLSAAQLLSVVERFRQAGLDQGVRLLHFHMGSQIANLADYQHGFKEAIRYYGELRALGLPVDHIDVGGGLGVDYDGTHSRNASSINYDIDDYAGVVVGMLKEFCDAQGLPHPHIFSESGRALTAHHAVLITQVTDVERHNDDVPKIVDLDEQPEIVRWLAELLGPTDAEMVTETYWRATHYIGDAAAQYADGKISLAQKALAEQCYFAICRRLHNQLKARQRSHRQVLDELNDKLADKYICNFSVFQSLPDTWAIGQVLPILPLHRLGEEPDRRAVLQDLTCDSDGKITQYVDEQSIETSLPVHEVKEGEDYLIGVFLVGAYQEILGDMHNLFGDTDSVNVYQRADGGIYHAGIETHDTIEDMLRYVHLSPEELMTLYRDKVAGAKLTARERNQYLDALRLGLTRSAYLS.

N6-(pyridoxal phosphate)lysine is present on Lys110. Residue 290-300 (IDVGGGLGVDY) participates in substrate binding.

The protein belongs to the Orn/Lys/Arg decarboxylase class-II family. SpeA subfamily. It depends on Mg(2+) as a cofactor. Pyridoxal 5'-phosphate is required as a cofactor.

The enzyme catalyses L-arginine + H(+) = agmatine + CO2. Its function is as follows. Catalyzes the biosynthesis of agmatine from arginine. This is Biosynthetic arginine decarboxylase from Pseudomonas aeruginosa (strain ATCC 15692 / DSM 22644 / CIP 104116 / JCM 14847 / LMG 12228 / 1C / PRS 101 / PAO1).